A 274-amino-acid polypeptide reads, in one-letter code: Diaminopimelate epimerase (274 aa).

3 residues coordinate substrate: Asn-11, Gln-44, and Asn-64. The active-site Proton donor is Cys-73. Substrate is bound by residues 74-75, Asn-157, Asn-190, and 208-209; these read GN and ER. Cys-217 serves as the catalytic Proton acceptor. 218–219 serves as a coordination point for substrate; the sequence is GT.

It belongs to the diaminopimelate epimerase family. In terms of assembly, homodimer.

The protein resides in the cytoplasm. It carries out the reaction (2S,6S)-2,6-diaminopimelate = meso-2,6-diaminopimelate. The protein operates within amino-acid biosynthesis; L-lysine biosynthesis via DAP pathway; DL-2,6-diaminopimelate from LL-2,6-diaminopimelate: step 1/1. In terms of biological role, catalyzes the stereoinversion of LL-2,6-diaminopimelate (L,L-DAP) to meso-diaminopimelate (meso-DAP), a precursor of L-lysine and an essential component of the bacterial peptidoglycan. This Blochmanniella pennsylvanica (strain BPEN) protein is Diaminopimelate epimerase.